The primary structure comprises 31 residues: Cyclotide mden-L (31 aa).

A cross-link (cyclopeptide (Gly-Asn)) is located at residues 1-31; it reads GSIPCGESCVYIPCISAVLGCSCKNKVCYRN. 3 disulfides stabilise this stretch: Cys-5-Cys-21, Cys-9-Cys-23, and Cys-14-Cys-28.

This sequence belongs to the cyclotide family. Bracelet subfamily. This is a cyclic peptide.

Its function is as follows. Probably participates in a plant defense mechanism. In Melicytus dentatus (Tree violet), this protein is Cyclotide mden-L.